The following is a 404-amino-acid chain: Argininosuccinate synthase (404 aa).

Residues 9–17 (AYSGGLDTS) and Ala-36 each bind ATP. Tyr-87 is an L-citrulline binding site. Gly-117 contributes to the ATP binding site. Thr-119, Asn-123, and Asp-124 together coordinate L-aspartate. Residue Asn-123 coordinates L-citrulline. Residues Arg-127, Ser-176, and Glu-261 each contribute to the L-citrulline site.

This sequence belongs to the argininosuccinate synthase family. Type 1 subfamily. In terms of assembly, homotetramer.

The protein localises to the cytoplasm. It carries out the reaction L-citrulline + L-aspartate + ATP = 2-(N(omega)-L-arginino)succinate + AMP + diphosphate + H(+). The protein operates within amino-acid biosynthesis; L-arginine biosynthesis; L-arginine from L-ornithine and carbamoyl phosphate: step 2/3. This chain is Argininosuccinate synthase, found in Burkholderia pseudomallei (strain K96243).